We begin with the raw amino-acid sequence, 352 residues long: N-terminal EF-hand calcium-binding protein 1 (352 aa).

S4 is modified (phosphoserine). 2 consecutive EF-hand domains span residues 26–61 (KGMS…GVLS) and 60–95 (LSGE…HLGE). The Ca(2+) site is built by D39, N41, D43, K45, and E50. The stretch at 135-163 (LLKETLNQLQSLQNSLECAMETTEEQTRQ) forms a coiled coil. Residues 180–202 (GKRSSRRVQRHNSFSPNSPQFNV) are disordered. Positions 190–202 (HNSFSPNSPQFNV) are enriched in polar residues. S192 and S197 each carry phosphoserine. Residues 209 to 275 (EEDNQWMTQI…EEFQLALKHY (67 aa)) adopt a coiled-coil conformation. One can recognise an ABM domain in the interval 252–340 (MLVQRQMSVI…LETPELTSTM (89 aa)).

In terms of assembly, interacts with STX1. May interact with CPNE6.

The protein resides in the cytoplasm. The chain is N-terminal EF-hand calcium-binding protein 1 (NECAB1) from Pongo abelii (Sumatran orangutan).